The primary structure comprises 417 residues: Actin-like protein 7B (417 aa).

Positions 1-39 (MATKNNPSPKPMGTAQGDPGEAGTLPAPEAGIRDTGSTQ) are disordered. Phosphoserine is present on Ser-8.

Belongs to the actin family.

The protein resides in the cytoplasm. It is found in the cytoskeleton. The protein is Actin-like protein 7B (Actl7b) of Rattus norvegicus (Rat).